Here is a 984-residue protein sequence, read N- to C-terminus: Ubiquitin conjugation factor E4 ufd-2 (984 aa).

A U-box domain is found at 909 to 982 (DVPEEFKDPI…QEWICQKRNS (74 aa)).

The protein belongs to the ubiquitin conjugation factor E4 family. In terms of assembly, forms a complex composed of deubiquitinating enzyme atx-3, E4 ubiquitin-protein ligase ufd-2 and cdc-48.1; within the complex interacts with atx-3 and cdc-48.1 (via DDDLYN motif). Forms a complex composed of cdc-48.1, myosin chaperone unc-45, ubiquitin-protein ligases ufd-2 and chn-1; the complex targets myosin chaperone unc-45 for proteasomal degradation; within the complex interacts with cdc-48.1 (via DDDLYN motif), chn-1 and unc-45. Forms a complex composed of unc-45 and myosin heavy chain B unc-54; the complex targets unfolded unc-54 for proteasomal degradation; within the complex interacts with unc-45 (via TPR domain) and unc-54. Interacts with cdc-48.2 (via DDDLYN motif). In terms of tissue distribution, expressed in the germline (at protein level).

The protein localises to the cytoplasm. The protein resides in the nucleus membrane. It localises to the nucleus. Its subcellular location is the nucleolus. It catalyses the reaction S-ubiquitinyl-[E2 ubiquitin-conjugating enzyme]-L-cysteine + [acceptor protein]-L-lysine = [E2 ubiquitin-conjugating enzyme]-L-cysteine + N(6)-ubiquitinyl-[acceptor protein]-L-lysine.. The protein operates within protein modification; protein ubiquitination. In terms of biological role, acts as an E4 ubiquitin ligase mediating the assembly of polyubiquitin chains on substrates ubiquitinated by another E3 ubiquitin ligase. The elongation of preexisting ubiquitin chains preferentially targets ubiquitin 'Lys-29' and 'Lys-48' residues. Also functions as an E3 ligase in conjunction with specific E1 and E2 ligases. Probably by regulating protein ubiquitination at DNA damage repair sites, coordinates DNA double-strand-break repair and apoptosis in the germline. Required for germline apoptosis in response to DNA damage downstream of cep-1. Involved in the resolution of DNA-repair sites by promoting the release of rad-51 from DNA damage foci. In association with protein-ligase chn-1, acts as an E3/E4 ligase to poly-ubiquitinate lysine residues in the UCS domain of myosin chaperone unc-45. By targeting myosin chaperone unc-45 for proteasomal degradation, regulates myosin assembly in body wall muscles in association with cdc-48.1 and chn-1. However, in a contrasting study, acts as an E3 ligase, independently of chn-1, to poly-ubiquitinate unc-45 without promoting unc-45 proteasomal degradation. Instead, uses unc-45 as an adapter protein to recruit and poly-ubiquitinate unfolded myosin heavy chain B unc-54. The protein is Ubiquitin conjugation factor E4 ufd-2 of Caenorhabditis elegans.